Consider the following 597-residue polypeptide: Bile salt-activated lipase (597 aa).

Residues 1–18 (LGASRLGPSPGCLAVASA) form the signal peptide. Cys82 and Cys98 are joined by a disulfide. An N-linked (GlcNAc...) asparagine glycan is attached at Asn205. Ser212 (acyl-ester intermediate) is an active-site residue. Residues Cys264 and Cys275 are joined by a disulfide bond. The active-site Charge relay system is Asp338. Asn379 carries N-linked (GlcNAc...) asparagine glycosylation. The active-site Charge relay system is the His453. The interval 553–591 (AGASLLPPEDNSQASPVPPADNSGAPTEPSAGDSEVAQM) is disordered.

The protein belongs to the type-B carboxylesterase/lipase family. In terms of assembly, interacts with CLC.

The protein localises to the secreted. The catalysed reaction is a triacylglycerol + H2O = a diacylglycerol + a fatty acid + H(+). It carries out the reaction 1,2,3-tri-(9Z-octadecenoyl)-glycerol + H2O = di-(9Z)-octadecenoylglycerol + (9Z)-octadecenoate + H(+). The enzyme catalyses 1,2,3-trioctanoylglycerol + H2O = dioctanoylglycerol + octanoate + H(+). It catalyses the reaction a sterol ester + H2O = a sterol + a fatty acid + H(+). The catalysed reaction is cholesteryl (9Z-octadecenoate) + H2O = cholesterol + (9Z)-octadecenoate + H(+). It carries out the reaction an acetyl ester + H2O = an aliphatic alcohol + acetate + H(+). The enzyme catalyses a butanoate ester + H2O = an aliphatic alcohol + butanoate + H(+). It catalyses the reaction 9-hexadecanoyloxy-octadecanoate + H2O = 9-hydroxy-octadecanoate + hexadecanoate + H(+). The catalysed reaction is 9-(9Z-octadecenoyloxy)-octadecanoate + H2O = 9-hydroxy-octadecanoate + (9Z)-octadecenoate + H(+). It carries out the reaction 1-hexadecanoyl-sn-glycero-3-phosphocholine + H2O = sn-glycerol 3-phosphocholine + hexadecanoate + H(+). The enzyme catalyses 12-hexadecanoyloxy-octadecanoate + H2O = 12-hydroxyoctadecanoate + hexadecanoate + H(+). It catalyses the reaction 12-(9Z-octadecenoyloxy)-octadecanoate + H2O = 12-hydroxyoctadecanoate + (9Z)-octadecenoate + H(+). The catalysed reaction is 13-(9Z-octadecenoyloxy)-octadecanoate + H2O = 13-hydroxy-octadecanoate + (9Z)-octadecenoate + H(+). It carries out the reaction 9-(9Z-hexadecenoyloxy)-octadecanoate + H2O = (9Z)-hexadecenoate + 9-hydroxy-octadecanoate + H(+). The enzyme catalyses 12-(9Z-hexadecenoyloxy)-octadecanoate + H2O = 12-hydroxyoctadecanoate + (9Z)-hexadecenoate + H(+). It catalyses the reaction 13-(9Z-hexadecenoyloxy)-octadecanoate + H2O = 13-hydroxy-octadecanoate + (9Z)-hexadecenoate + H(+). The catalysed reaction is 12-octadecanoyloxy-octadecanoate + H2O = 12-hydroxyoctadecanoate + octadecanoate + H(+). It carries out the reaction 13-octadecanoyloxy-octadecanoate + H2O = 13-hydroxy-octadecanoate + octadecanoate + H(+). The enzyme catalyses 5-(9Z-hexadecenoyloxy)-octadecanoate + H2O = 5-hydroxy-octadecanoate + (9Z)-hexadecenoate + H(+). It catalyses the reaction 9-octadecanoyloxy-octadecanoate + H2O = 9-hydroxy-octadecanoate + octadecanoate + H(+). With respect to regulation, activated by bile salts such as sodium taurocholate. Its function is as follows. Catalyzes the hydrolysis of a wide range of substrates including cholesteryl esters, phospholipids, lysophospholipids, di- and tri-acylglycerols, and fatty acid esters of hydroxy fatty acids (FAHFA). Preferentially hydrolyzes FAHFAs with the ester bond further away from the carboxylate. Unsaturated FAHFAs are hydrolyzed more quickly than saturated FAHFAs. Has an essential role in the complete digestion of dietary lipids and their intestinal absorption, along with the absorption of fat-soluble vitamins. This is Bile salt-activated lipase (CEL) from Bos taurus (Bovine).